Consider the following 595-residue polypeptide: Putative capsid protein V20 (595 aa).

The protein localises to the virion. In terms of biological role, may self assemble to form an icosahedral capsid. Most abundant protein in the virion. The polypeptide is Putative capsid protein V20 (Sputnik virophage).